The following is a 227-amino-acid chain: ATP synthase subunit a (227 aa).

The next 5 membrane-spanning stretches (helical) occupy residues 16–36, 79–99, 105–125, 176–196, and 202–222; these read AFVY…VAYI, LVAT…IPGF, SLNL…FEGI, LFLL…AFAL, and VLQT…AVAI.

Belongs to the ATPase A chain family. In terms of assembly, F-type ATPases have 2 components, CF(1) - the catalytic core - and CF(0) - the membrane proton channel. CF(1) has five subunits: alpha(3), beta(3), gamma(1), delta(1), epsilon(1). CF(0) has three main subunits: a(1), b(2) and c(9-12). The alpha and beta chains form an alternating ring which encloses part of the gamma chain. CF(1) is attached to CF(0) by a central stalk formed by the gamma and epsilon chains, while a peripheral stalk is formed by the delta and b chains.

Its subcellular location is the cell inner membrane. In terms of biological role, key component of the proton channel; it plays a direct role in the translocation of protons across the membrane. The sequence is that of ATP synthase subunit a from Campylobacter concisus (strain 13826).